Consider the following 275-residue polypeptide: Large ribosomal subunit protein uL2 (275 aa).

Residues 212–275 are disordered; the sequence is NRHRGIRPQT…DKLIISRRKK (64 aa). The span at 257–275 shows a compositional bias: basic residues; that stretch reads YKTRRKKPSDKLIISRRKK.

This sequence belongs to the universal ribosomal protein uL2 family. In terms of assembly, part of the 50S ribosomal subunit. Forms a bridge to the 30S subunit in the 70S ribosome.

One of the primary rRNA binding proteins. Required for association of the 30S and 50S subunits to form the 70S ribosome, for tRNA binding and peptide bond formation. It has been suggested to have peptidyltransferase activity; this is somewhat controversial. Makes several contacts with the 16S rRNA in the 70S ribosome. This is Large ribosomal subunit protein uL2 from Nitratiruptor sp. (strain SB155-2).